The following is a 201-amino-acid chain: MPFKPLVTAGIEGLLNTFLYRSPALKSARTRLQGKVLCVKLKGFSMPLVLVFSERQVDVLGAWEGEADCTVITQASVLPKLRDRQQLATLIRSGELEVQGDIQVVQNFVALADLAEFDPAELLAPYTGDIAAESIGKVVRGGAKFLRHGFQRQQRYAAEAITEEWRMAPGPLEVAWFAEETAAVERAVDSLTTRLEKLEAK.

Residues 15–112 (LNTFLYRSPA…QVVQNFVALA (98 aa)) enclose the SCP2 domain.

It belongs to the UbiJ family.

The protein resides in the cytoplasm. It participates in cofactor biosynthesis; ubiquinone biosynthesis. Its function is as follows. Required for ubiquinone (coenzyme Q) biosynthesis under aerobic conditions. Binds hydrophobic ubiquinone biosynthetic intermediates via its SCP2 domain and is essential for the stability of the Ubi complex. May constitute a docking platform where Ubi enzymes assemble and access their SCP2-bound polyprenyl substrates. Required for intracellular proliferation in macrophages. The polypeptide is Ubiquinone biosynthesis accessory factor UbiJ (Salmonella typhimurium (strain LT2 / SGSC1412 / ATCC 700720)).